The primary structure comprises 313 residues: Ribosomal RNA small subunit methyltransferase H (313 aa).

S-adenosyl-L-methionine-binding positions include 35-37 (GGH), aspartate 55, phenylalanine 81, aspartate 103, and glutamine 110.

This sequence belongs to the methyltransferase superfamily. RsmH family.

The protein resides in the cytoplasm. It catalyses the reaction cytidine(1402) in 16S rRNA + S-adenosyl-L-methionine = N(4)-methylcytidine(1402) in 16S rRNA + S-adenosyl-L-homocysteine + H(+). In terms of biological role, specifically methylates the N4 position of cytidine in position 1402 (C1402) of 16S rRNA. The protein is Ribosomal RNA small subunit methyltransferase H of Pseudomonas paraeruginosa (strain DSM 24068 / PA7) (Pseudomonas aeruginosa (strain PA7)).